Here is a 141-residue protein sequence, read N- to C-terminus: Large ribosomal subunit protein uL11 (141 aa).

It belongs to the universal ribosomal protein uL11 family. Part of the ribosomal stalk of the 50S ribosomal subunit. Interacts with L10 and the large rRNA to form the base of the stalk. L10 forms an elongated spine to which L12 dimers bind in a sequential fashion forming a multimeric L10(L12)X complex. One or more lysine residues are methylated.

Its function is as follows. Forms part of the ribosomal stalk which helps the ribosome interact with GTP-bound translation factors. This chain is Large ribosomal subunit protein uL11, found in Lactiplantibacillus plantarum (strain ATCC BAA-793 / NCIMB 8826 / WCFS1) (Lactobacillus plantarum).